The chain runs to 1156 residues: Pesticidal crystal protein Cry9Aa (1156 aa).

Residues 1–23 (MNQNKHGIIGASNCGCASDDVAK) constitute a propeptide, removed in mature form.

Belongs to the delta endotoxin family.

Functionally, promotes colloidosmotic lysis by binding to the midgut epithelial cells of insects. This protein is toxic to Galleria mellonella. The polypeptide is Pesticidal crystal protein Cry9Aa (cry9Aa) (Bacillus thuringiensis subsp. galleriae).